The chain runs to 423 residues: Heat shock transcription factor, X-linked (423 aa).

Residues 1 to 25 (MEDKRSLSMARCEERNSRGQDHGLE) are compositionally biased toward basic and acidic residues. 3 disordered regions span residues 1-56 (MEDK…STGS), 215-303 (KSAP…EGSQ), and 397-423 (PHSHRTSQYMPASDGPQAYPDYADQST). A DNA-binding region spans residues 98–282 (PFPQKLWRLV…PATPVMVPDS (185 aa)). Lys215 is covalently cross-linked (Glycyl lysine isopeptide (Lys-Gly) (interchain with G-Cter in SUMO1)). A compositionally biased stretch (polar residues) spans 243-254 (HTSPNENDQVTP).

The protein belongs to the HSF family. Testis-specific.

Its subcellular location is the nucleus. The protein localises to the cytoplasm. The polypeptide is Heat shock transcription factor, X-linked (HSFX1) (Homo sapiens (Human)).